The sequence spans 717 residues: Glutamine--fructose-6-phosphate aminotransferase [isomerizing] (717 aa).

Residue C2 is the For GATase activity of the active site. Positions 2–318 (CGIFGYCNYL…DDDLAHIYDG (317 aa)) constitute a Glutamine amidotransferase type-2 domain. S253 is subject to Phosphoserine. At T334 the chain carries Phosphothreonine. At S336 the chain carries Phosphoserine. SIS domains follow at residues 390–529 (WLPV…DRVS) and 562–707 (CATE…VDFP).

It catalyses the reaction D-fructose 6-phosphate + L-glutamine = D-glucosamine 6-phosphate + L-glutamate. Its pathway is nucleotide-sugar biosynthesis; UDP-N-acetyl-alpha-D-glucosamine biosynthesis; alpha-D-glucosamine 6-phosphate from D-fructose 6-phosphate: step 1/1. Its function is as follows. Involved in amino sugar synthesis (formation of chitin, supplies the amino sugars of asparagine-linked oligosaccharides of glycoproteins). This chain is Glutamine--fructose-6-phosphate aminotransferase [isomerizing] (GFA1), found in Saccharomyces cerevisiae (strain ATCC 204508 / S288c) (Baker's yeast).